The primary structure comprises 405 residues: Cytochrome P450 130 (405 aa).

2 residues coordinate substrate: aspartate 93 and histidine 97. Heme-binding residues include arginine 101, glycine 243, arginine 295, tyrosine 318, serine 348, histidine 352, and cysteine 354.

It belongs to the cytochrome P450 family. Homodimer. Requires heme as cofactor.

In Mycobacterium tuberculosis (strain CDC 1551 / Oshkosh), this protein is Cytochrome P450 130 (cyp130).